The chain runs to 75 residues: U6-lycotoxin-Ls1c (75 aa).

An N-terminal signal peptide occupies residues 1–21 (MKLLLFTALVLVVISLIEVEA). A propeptide spanning residues 22–25 (ENER) is cleaved from the precursor. 4 disulfides stabilise this stretch: cysteine 27/cysteine 42, cysteine 34/cysteine 47, cysteine 41/cysteine 65, and cysteine 49/cysteine 63.

The protein belongs to the neurotoxin 19 (CSTX) family. 06 (U6-Lctx) subfamily. Expressed by the venom gland.

The protein resides in the secreted. The protein is U6-lycotoxin-Ls1c of Lycosa singoriensis (Wolf spider).